The primary structure comprises 753 residues: 5-methyltetrahydropteroyltriglutamate--homocysteine methyltransferase (753 aa).

Residues 17–20 (RELK) and Lys117 contribute to the 5-methyltetrahydropteroyltri-L-glutamate site. Residues 431–433 (IGS) and Glu484 each bind L-homocysteine. L-methionine-binding positions include 431–433 (IGS) and Glu484. Residues 515 to 516 (RC) and Trp561 each bind 5-methyltetrahydropteroyltri-L-glutamate. Asp599 lines the L-homocysteine pocket. Residue Asp599 participates in L-methionine binding. Glu605 lines the 5-methyltetrahydropteroyltri-L-glutamate pocket. Positions 641, 643, and 665 each coordinate Zn(2+). The Proton donor role is filled by His694. Residue Cys726 coordinates Zn(2+).

Belongs to the vitamin-B12 independent methionine synthase family. Zn(2+) serves as cofactor.

The catalysed reaction is 5-methyltetrahydropteroyltri-L-glutamate + L-homocysteine = tetrahydropteroyltri-L-glutamate + L-methionine. The protein operates within amino-acid biosynthesis; L-methionine biosynthesis via de novo pathway; L-methionine from L-homocysteine (MetE route): step 1/1. Functionally, catalyzes the transfer of a methyl group from 5-methyltetrahydrofolate to homocysteine resulting in methionine formation. This is 5-methyltetrahydropteroyltriglutamate--homocysteine methyltransferase from Shigella flexneri serotype 5b (strain 8401).